The primary structure comprises 515 residues: MEFVVSPFAFLIFFFILLKMIAKNFKNPKKNTKPLPPGPKKLPIIGNLHQLGGGLAHHILRDLSQNYGPLMHLKIGELSTIVISSTEMAKQVFKVHDIHFSNRPSHILVFKIVSYDYKDIVLSQYGNYWRELRKVCNLHLLSPNRVQSFRFIREDSVLNMMKSISSNEGKVVNLSEMILSLIYGITARAAFGVWSKRHEEFIRLESEIQRLATTFVLADMFPSIKILGALSGLRYKVEKVHKKVDEILEDILKEHRNNNISIEKEEEEEEENNGGKKDLVDVLLDIQKNGEMETPFTDQHIKAIIFDMFSAGTLTSTIAVDWAMAEMMKNPRVMKRAQEEVRNVYNGIGNVNESKLDELKYLQAIIKETLRIHPGTPIVHRETREECEINGYRIPAKARVMVNAWAISRDPNYWPDPDSFKPERFLGSEVDFKGTHFEYTPFGAGRRICPGISYAIANIQLPLAQLLYHFDWKLAGGMKPEELDMAEILGTAAQRKEDLLLIPNSHSCSSLKQQV.

The helical transmembrane segment at 1 to 21 (MEFVVSPFAFLIFFFILLKMI) threads the bilayer. Residues asparagine 173, asparagine 259, and asparagine 352 are each glycosylated (N-linked (GlcNAc...) asparagine). Cysteine 449 serves as a coordination point for heme.

Belongs to the cytochrome P450 family. It depends on heme as a cofactor. Mainly expressed in aerial organs, including stems, leaves and flowers.

The protein resides in the endoplasmic reticulum membrane. The catalysed reaction is (-)-tabersonine + reduced [NADPH--hemoprotein reductase] + O2 = lochnericine + oxidized [NADPH--hemoprotein reductase] + H2O + H(+). Its pathway is alkaloid biosynthesis. Functionally, component of the monoterpenoid indole alkaloids (MIAs, e.g. echitovenine, tabersonine, lochnericine, 19-hydroxytabersonine and horhammericine) biosynthetic pathway; MIAs are used in cancer treatment and other medical applications. Cytochrome P450 catalyzing the conversion of tabersonine to lochnericine. The chain is Tabersonine 6,7-epoxidase isoform 2 from Catharanthus roseus (Madagascar periwinkle).